Here is a 319-residue protein sequence, read N- to C-terminus: ATP-dependent 6-phosphofructokinase (319 aa).

Gly11 contributes to the ATP binding site. 21–25 (RAVVR) is an ADP binding site. ATP is bound by residues 72–73 (RC) and 102–105 (GDGS). Asp103 is a Mg(2+) binding site. Residue 125–127 (TID) coordinates substrate. Asp127 serves as the catalytic Proton acceptor. Position 154 (Arg154) interacts with ADP. Substrate is bound by residues Arg162 and 169–171 (MGR). Residues 185 to 187 (GAE), Arg211, and 213 to 215 (KLH) contribute to the ADP site. Substrate contacts are provided by residues Glu222, Arg243, and 249 to 252 (HLQR).

Belongs to the phosphofructokinase type A (PFKA) family. ATP-dependent PFK group I subfamily. Prokaryotic clade 'B1' sub-subfamily. As to quaternary structure, homotetramer. Mg(2+) serves as cofactor.

Its subcellular location is the cytoplasm. The catalysed reaction is beta-D-fructose 6-phosphate + ATP = beta-D-fructose 1,6-bisphosphate + ADP + H(+). The protein operates within carbohydrate degradation; glycolysis; D-glyceraldehyde 3-phosphate and glycerone phosphate from D-glucose: step 3/4. Allosterically activated by ADP and other diphosphonucleosides, and allosterically inhibited by phosphoenolpyruvate. Catalyzes the phosphorylation of D-fructose 6-phosphate to fructose 1,6-bisphosphate by ATP, the first committing step of glycolysis. The protein is ATP-dependent 6-phosphofructokinase of Clostridium novyi (strain NT).